The primary structure comprises 485 residues: Proline--tRNA ligase (485 aa).

It belongs to the class-II aminoacyl-tRNA synthetase family. ProS type 3 subfamily. In terms of assembly, homodimer.

It is found in the cytoplasm. The enzyme catalyses tRNA(Pro) + L-proline + ATP = L-prolyl-tRNA(Pro) + AMP + diphosphate. Catalyzes the attachment of proline to tRNA(Pro) in a two-step reaction: proline is first activated by ATP to form Pro-AMP and then transferred to the acceptor end of tRNA(Pro). This Methanopyrus kandleri (strain AV19 / DSM 6324 / JCM 9639 / NBRC 100938) protein is Proline--tRNA ligase.